The primary structure comprises 367 residues: Leu/Ile/Val-binding protein (367 aa).

An N-terminal signal peptide occupies residues 1-23; that stretch reads MNMKGKALLAGCIALSLSNMAFA. A disulfide bond links Cys-76 and Cys-101.

The protein belongs to the leucine-binding protein family.

The protein localises to the periplasm. In terms of biological role, this protein is a component of the leucine, isoleucine, valine, (threonine) transport system, which is one of the two periplasmic binding protein-dependent transport systems of the high-affinity transport of the branched-chain amino acids. The protein is Leu/Ile/Val-binding protein (livJ) of Citrobacter freundii.